Reading from the N-terminus, the 788-residue chain is Probable phosphoketolase 1 (788 aa).

The protein belongs to the XFP family. Thiamine diphosphate serves as cofactor.

The chain is Probable phosphoketolase 1 from Lactiplantibacillus plantarum (strain ATCC BAA-793 / NCIMB 8826 / WCFS1) (Lactobacillus plantarum).